A 342-amino-acid chain; its full sequence is uncharacterized protein (342 aa).

The first 18 residues, 1–18 (MWKKLMLLLLMAIPLVSA), serve as a signal peptide directing secretion.

This is an uncharacterized protein from Methanocaldococcus jannaschii (strain ATCC 43067 / DSM 2661 / JAL-1 / JCM 10045 / NBRC 100440) (Methanococcus jannaschii).